The following is a 945-amino-acid chain: Glutamyl aminopeptidase (945 aa).

Residues 1-18 (MNFAEEEPSKKYCIKGKH) are Cytoplasmic-facing. A helical; Signal-anchor for type II membrane protein transmembrane segment spans residues 19 to 39 (VAIICATVVAVGLIVGLSVGL). Topologically, residues 40 to 945 (TRSCEPGTTP…SISEWFTSMP (906 aa)) are extracellular. A disordered region spans residues 45–77 (PGTTPAPSNPPPHTSTALPPQDQNVCPDSDDES). N-linked (GlcNAc...) asparagine glycosylation is found at Asn-116 and Asn-189. Glu-215 is a binding site for substrate. N-linked (GlcNAc...) asparagine glycosylation is found at Asn-236 and Asn-316. Position 349–353 (349–353 (GAMEN)) interacts with substrate. Residue His-385 participates in Zn(2+) binding. The Proton acceptor role is filled by Glu-386. Zn(2+) is bound by residues His-389 and Glu-408. Residues Asn-546, Asn-584, Asn-601, Asn-640, Asn-669, Asn-754, Asn-766, and Asn-792 are each glycosylated (N-linked (GlcNAc...) asparagine). Arg-878 serves as a coordination point for substrate.

Belongs to the peptidase M1 family. In terms of assembly, homodimer; disulfide-linked. The cofactor is Zn(2+). Highest expression in kidney proximal tubules and ileum enterocytes. High expression also detected in liver and pituitary. Lower levels in heart, adrenal gland and brain. Not detected in aorta, lung or spleen. In heart, higher levels in ventricle than in atrium. Also expressed in glomerular mesangial cells.

The protein localises to the cell membrane. It catalyses the reaction Release of N-terminal glutamate (and to a lesser extent aspartate) from a peptide.. Substrate specificity is modulated by calcium which enhances the enzymatic activity for cleavage of acidic residues while reducing its activity with basic residues. Inhibited by aminopeptidase inhibitors amastatin and bestatin. Regulates central hypertension through its calcium-modulated preference to cleave N-terminal acidic residues from peptides such as angiotensin II. This chain is Glutamyl aminopeptidase (Enpep), found in Rattus norvegicus (Rat).